We begin with the raw amino-acid sequence, 158 residues long: Acetolactate synthase small subunit (158 aa).

The ACT domain maps to 4–78 (ILSVLLENES…DVLRVIKVGQ (75 aa)).

The protein belongs to the acetolactate synthase small subunit family. As to quaternary structure, dimer of large and small chains.

It catalyses the reaction 2 pyruvate + H(+) = (2S)-2-acetolactate + CO2. It participates in amino-acid biosynthesis; L-isoleucine biosynthesis; L-isoleucine from 2-oxobutanoate: step 1/4. Its pathway is amino-acid biosynthesis; L-valine biosynthesis; L-valine from pyruvate: step 1/4. The chain is Acetolactate synthase small subunit (ilvH) from Buchnera aphidicola subsp. Schizaphis graminum (strain Sg).